A 427-amino-acid polypeptide reads, in one-letter code: Extracellular superoxide dismutase [Cu-Zn] 2 (427 aa).

Residues 1 to 20 form the signal peptide; it reads MNKLIISLLIVLSAISIISA. The Extracellular portion of the chain corresponds to 21–406; it reads DYQYGYCKFG…PTETSQPGTS (386 aa). Residues Asn-38, Asn-57, Asn-81, Asn-190, and Asn-218 are each glycosylated (N-linked (GlcNAc...) asparagine). Cu cation contacts are provided by His-257, His-259, and His-275. Zn(2+)-binding residues include His-275 and His-283. A glycan (N-linked (GlcNAc...) asparagine) is linked at Asn-288. 2 residues coordinate Zn(2+): His-292 and Asp-295. His-331 is a Cu cation binding site. A glycan (N-linked (GlcNAc...) asparagine) is linked at Asn-376. Positions 381–404 are disordered; the sequence is GESTIEPSPTPSTTPTPTETSQPG. Residues 395 to 404 show a composition bias toward low complexity; sequence PTPTETSQPG. A helical transmembrane segment spans residues 407–426; it reads SYLAPFFVLILSSLISVILI. Leu-427 is a topological domain (cytoplasmic).

The protein belongs to the Cu-Zn superoxide dismutase family. It depends on Cu cation as a cofactor. Zn(2+) serves as cofactor.

The protein localises to the cell membrane. The catalysed reaction is 2 superoxide + 2 H(+) = H2O2 + O2. In terms of biological role, protect the extracellular space from toxic effect of reactive oxygen intermediates by converting superoxyde radicals into hydrogen peroxyde and oxygen. The sequence is that of Extracellular superoxide dismutase [Cu-Zn] 2 (sodB) from Dictyostelium discoideum (Social amoeba).